Here is a 199-residue protein sequence, read N- to C-terminus: Recombination protein RecR (199 aa).

The C4-type zinc-finger motif lies at 57–72; the sequence is CQSCRTFTEETYCPIC. Residues 81–176 form the Toprim domain; the sequence is EVICVVETPA…TVSRIAHGVP (96 aa).

Belongs to the RecR family.

Functionally, may play a role in DNA repair. It seems to be involved in an RecBC-independent recombinational process of DNA repair. It may act with RecF and RecO. This Shewanella pealeana (strain ATCC 700345 / ANG-SQ1) protein is Recombination protein RecR.